The following is a 66-amino-acid chain: UPF0337 protein SpyM3_0896 (66 aa).

It belongs to the UPF0337 (CsbD) family.

This is UPF0337 protein SpyM3_0896 from Streptococcus pyogenes serotype M3 (strain ATCC BAA-595 / MGAS315).